A 433-amino-acid chain; its full sequence is Glutamate-1-semialdehyde 2,1-aminomutase (433 aa).

K271 carries the N6-(pyridoxal phosphate)lysine modification.

Belongs to the class-III pyridoxal-phosphate-dependent aminotransferase family. HemL subfamily. In terms of assembly, homodimer. Pyridoxal 5'-phosphate serves as cofactor.

The protein localises to the cytoplasm. The catalysed reaction is (S)-4-amino-5-oxopentanoate = 5-aminolevulinate. It functions in the pathway porphyrin-containing compound metabolism; protoporphyrin-IX biosynthesis; 5-aminolevulinate from L-glutamyl-tRNA(Glu): step 2/2. Its pathway is porphyrin-containing compound metabolism; chlorophyll biosynthesis. The chain is Glutamate-1-semialdehyde 2,1-aminomutase from Prochlorococcus marinus (strain MIT 9515).